We begin with the raw amino-acid sequence, 368 residues long: P2X receptor C (368 aa).

The Cytoplasmic segment spans residues 1-24 (MLDWDSILAYNTIKVVRIRDRRLG). The helical transmembrane segment at 25–45 (ILHLIFMIAIISYVVIYSAII) threads the bilayer. Topologically, residues 46–368 (KKGYLSIEEP…DKLYHNIEAL (323 aa)) are lumenal. The segment at 282–295 (RHAIRLIFIQTGVI) is pore-forming motif.

This sequence belongs to the P2X receptor family.

Its subcellular location is the contractile vacuole membrane. Functionally, P2X receptors are ligand-gated ion channels that play a role in intracellular calcium signaling. ATP does not evoke inward currents in p2xC. Not essential for osmoregulation. This Dictyostelium discoideum (Social amoeba) protein is P2X receptor C (p2xC).